A 414-amino-acid chain; its full sequence is DNA primase small subunit PriS (414 aa).

Catalysis depends on residues Asp-98, Asp-100, and Asp-312.

It belongs to the eukaryotic-type primase small subunit family. In terms of assembly, heterodimer of a small subunit (PriS) and a large subunit (PriL). Requires Mg(2+) as cofactor. The cofactor is Mn(2+).

Catalytic subunit of DNA primase, an RNA polymerase that catalyzes the synthesis of short RNA molecules used as primers for DNA polymerase during DNA replication. The small subunit contains the primase catalytic core and has DNA synthesis activity on its own. Binding to the large subunit stabilizes and modulates the activity, increasing the rate of DNA synthesis while decreasing the length of the DNA fragments, and conferring RNA synthesis capability. The DNA polymerase activity may enable DNA primase to also catalyze primer extension after primer synthesis. May also play a role in DNA repair. This Methanosarcina mazei (strain ATCC BAA-159 / DSM 3647 / Goe1 / Go1 / JCM 11833 / OCM 88) (Methanosarcina frisia) protein is DNA primase small subunit PriS.